An 89-amino-acid polypeptide reads, in one-letter code: RNA-binding protein Hfq (89 aa).

A Sm domain is found at 9 to 68 (DPFLNALRRERVPVSIYLVNGIKLQGQVESFDQFVILLKNTVSQMVYKHAISTVVPARAL).

It belongs to the Hfq family. In terms of assembly, homohexamer.

RNA chaperone that binds small regulatory RNA (sRNAs) and mRNAs to facilitate mRNA translational regulation in response to envelope stress, environmental stress and changes in metabolite concentrations. Also binds with high specificity to tRNAs. This Shewanella denitrificans (strain OS217 / ATCC BAA-1090 / DSM 15013) protein is RNA-binding protein Hfq.